We begin with the raw amino-acid sequence, 262 residues long: Hydroxyacylglutathione hydrolase (262 aa).

Histidine 53, histidine 55, aspartate 57, histidine 58, histidine 111, aspartate 128, and histidine 166 together coordinate Zn(2+).

Belongs to the metallo-beta-lactamase superfamily. Glyoxalase II family. As to quaternary structure, monomer. Zn(2+) is required as a cofactor.

The catalysed reaction is an S-(2-hydroxyacyl)glutathione + H2O = a 2-hydroxy carboxylate + glutathione + H(+). The protein operates within secondary metabolite metabolism; methylglyoxal degradation; (R)-lactate from methylglyoxal: step 2/2. In terms of biological role, thiolesterase that catalyzes the hydrolysis of S-D-lactoyl-glutathione to form glutathione and D-lactic acid. This chain is Hydroxyacylglutathione hydrolase, found in Nitrosomonas europaea (strain ATCC 19718 / CIP 103999 / KCTC 2705 / NBRC 14298).